The primary structure comprises 419 residues: Equilibrative nucleotide transporter 5 (419 aa).

11 helical membrane-spanning segments follow: residues 20–40 (MVVC…LLSV), 56–76 (VLTF…AYNE), 86–106 (LIGY…DLAT), 108–128 (GHGG…FGFA), 142–162 (LMCP…GALT), 186–206 (IFLA…AYVF), 265–285 (YVVN…GFLY), 292–312 (GLGS…DLVG), 327–347 (KGLT…YFTA), 354–374 (WMIL…VCIL), and 393–413 (LVLF…LWLI).

It belongs to the SLC29A/ENT transporter (TC 2.A.57) family.

Its subcellular location is the cell membrane. May be involved in nucleoside transport. This Arabidopsis thaliana (Mouse-ear cress) protein is Equilibrative nucleotide transporter 5 (ENT5).